A 1757-amino-acid polypeptide reads, in one-letter code: E3 ubiquitin-protein ligase UBR1 (1757 aa).

The tract at residues Met1–Arg24 is disordered. Ala2 carries the post-translational modification N-acetylalanine. The UBR-type zinc-finger motif lies at Gln97–Pro168. 7 residues coordinate Zn(2+): Cys99, Cys112, Cys115, Cys124, Cys127, His133, and His136. Residue Phe148 coordinates a peptide. Residue Cys149 coordinates Zn(2+). Asp150 is an a peptide binding site. Cys151 serves as a coordination point for Zn(2+). Asp153 contributes to the a peptide binding site. Zn(2+)-binding residues include Cys163 and His166. Positions Gln842–Pro868 are disordered. The interval Arg1022–Asn1057 is UBC2-binding region (U2BR). Zn(2+) is bound by residues Cys1101, Cys1104, Cys1162, His1164, His1167, and Cys1170. The RING-type; atypical zinc finger occupies Cys1101 to Lys1204. At Ser1182 the chain carries Phosphoserine. Residues Cys1200, Cys1203, Cys1635, Cys1638, and Cys1661 each coordinate Zn(2+).

The protein belongs to the E3 ubiquitin-protein ligase UBR1-like family. In terms of assembly, interacts with RECQL4. As to expression, present in skeletal muscle and liver (at protein level). Broadly expressed, with highest levels in skeletal muscle and heart. Expressed in acinar cells of the pancreas. In testes, expressed primarily in spermatogonia.

Its subcellular location is the cytoplasm. It localises to the cytosol. It carries out the reaction S-ubiquitinyl-[E2 ubiquitin-conjugating enzyme]-L-cysteine + [acceptor protein]-L-lysine = [E2 ubiquitin-conjugating enzyme]-L-cysteine + N(6)-ubiquitinyl-[acceptor protein]-L-lysine.. It functions in the pathway protein modification; protein ubiquitination. Functionally, E3 ubiquitin-protein ligase which is a component of the N-end rule pathway. Recognizes and binds proteins bearing specific N-terminal residues (N-degrons) that are destabilizing according to the N-end rule, leading to their ubiquitination and subsequent degradation. Recognizes both type-1 and type-2 N-degrons, containing positively charged amino acids (Arg, Lys and His) and bulky and hydrophobic amino acids, respectively. Does not ubiquitinate proteins that are acetylated at the N-terminus. In contrast, it strongly binds methylated N-degrons. Binds leucine and is a negative regulator of the leucine-mTOR signaling pathway, thereby controlling cell growth. This chain is E3 ubiquitin-protein ligase UBR1, found in Mus musculus (Mouse).